A 246-amino-acid chain; its full sequence is Sulfate transporter CysZ (246 aa).

Transmembrane regions (helical) follow at residues 24-44, 69-89, 148-168, and 214-234; these read LFVL…IGFA, IVWP…FTMV, LLVL…WILF, and LLIP…ATLF.

This sequence belongs to the CysZ family.

The protein resides in the cell inner membrane. Functionally, high affinity, high specificity proton-dependent sulfate transporter, which mediates sulfate uptake. Provides the sulfur source for the cysteine synthesis pathway. The sequence is that of Sulfate transporter CysZ from Pseudomonas paraeruginosa (strain DSM 24068 / PA7) (Pseudomonas aeruginosa (strain PA7)).